An 85-amino-acid chain; its full sequence is Putative transmembrane protein ORF85 (85 aa).

Helical transmembrane passes span 12 to 32 (FPPTTLIVLALGSAIAYKFLS) and 44 to 64 (LGIILVFLGHGGVISTIGAGI).

It localises to the host membrane. The protein is Putative transmembrane protein ORF85 of Acidianus convivator (ABV).